The sequence spans 282 residues: Pantothenate synthetase (282 aa).

30-37 (MGYLHEGH) is an ATP binding site. The active-site Proton donor is histidine 37. Position 61 (glutamine 61) interacts with (R)-pantoate. Glutamine 61 is a beta-alanine binding site. Residue 147–150 (GMKD) participates in ATP binding. Glutamine 153 serves as a coordination point for (R)-pantoate. Residues valine 176 and 184–187 (KSSR) contribute to the ATP site.

Belongs to the pantothenate synthetase family. Homodimer.

The protein resides in the cytoplasm. The catalysed reaction is (R)-pantoate + beta-alanine + ATP = (R)-pantothenate + AMP + diphosphate + H(+). Its pathway is cofactor biosynthesis; (R)-pantothenate biosynthesis; (R)-pantothenate from (R)-pantoate and beta-alanine: step 1/1. Catalyzes the condensation of pantoate with beta-alanine in an ATP-dependent reaction via a pantoyl-adenylate intermediate. The polypeptide is Pantothenate synthetase (Bacillus cereus (strain ZK / E33L)).